The following is a 608-amino-acid chain: Afamin (608 aa).

A signal peptide spans 1 to 21; it reads MRHLKLTGFIFFLLSLTESLA. 3 Albumin domains span residues 22–210, 211–403, and 404–599; these read LPTK…APIT, QYLK…KFNE, and TTER…KTGD. N33 carries N-linked (GlcNAc...) asparagine glycosylation. Cystine bridges form between C77-C86, C99-C114, C113-C124, C148-C193, C224-C270, C269-C277, C289-C303, C302-C313, C340-C385, and C384-C393. N109 carries an N-linked (GlcNAc...) asparagine glycan. N153 carries an N-linked (GlcNAc...) asparagine glycan. Positions 215-319 are binding pocket for hydrophobic ligands; it reads ALSSYQRNVC…RADCIINANK (105 aa). N-linked (GlcNAc...) asparagine glycosylation is present at N402. Disulfide bonds link C416–C462, C461–C470, C483–C499, C498–C509, and C580–C589. An N-linked (GlcNAc...) asparagine glycan is attached at N488. The disordered stretch occupies residues 585 to 608; the sequence is KPEACFSPESSKTGDVSQDAEKQR.

It belongs to the ALB/AFP/VDB family. Forms a 1:1 complex with Wnt family members; interacts with WNT1, WNT2B, WNT3, WNT3A, WNT5A, WNT7A, WNT7B, WNT8, WNT9A, WNT9B, WNT10A and WNT10B. N-glycosylated; more than 90% of the glycans are sialylated.

It localises to the secreted. Functionally, functions as a carrier for hydrophobic molecules in body fluids. Essential for the solubility and activity of lipidated Wnt family members, including WNT1, WNT2B, WNT3, WNT3A, WNT5A, WNT7A, WNT7B, WNT8, WNT9A, WNT9B, WNT10A and WNT10B. Binds vitamin E. May transport vitamin E in body fluids under conditions where the lipoprotein system is not sufficient. May be involved in the transport of vitamin E across the blood-brain barrier. The protein is Afamin (Afm) of Rattus norvegicus (Rat).